A 149-amino-acid chain; its full sequence is Large ribosomal subunit protein bL9 (149 aa).

This sequence belongs to the bacterial ribosomal protein bL9 family.

Functionally, binds to the 23S rRNA. The sequence is that of Large ribosomal subunit protein bL9 from Geobacillus thermodenitrificans (strain NG80-2).